A 350-amino-acid chain; its full sequence is MTMGGTEKNVENKQYRLPREVKEALQAIASEWEDVIDSKALQVIPLKGAMTNEVFQIKWPTREKGPSRKVLVRIYGEGVEIFFDREDEIRTFEFMSKHGHGPLLLGRFGNGRIEEFLHARTLSACDLRDPEISGRIATRMKEFHGLEMPGAKKALLWDRLRNWLTACKRLASPEEAKSFRLDVMEMEINMLEKSLFDNDENIGFCHNDLQYGNIMMDEETKAITIIDYEYSCYNPVAYDIANHFCEMAADYHTETPHIMDYSKYPGVEERQRFLKTYMSYSDEKPSDTMVKKLLEDVEKYTLASHLIWGLWGIISEHVNEIDFDYMEYARQRFEQYWLTKPRLLAASEHK.

Residues Arg-73, Gln-210, and Asp-227 each contribute to the ATP site.

The protein belongs to the choline/ethanolamine kinase family.

It carries out the reaction choline + ATP = phosphocholine + ADP + H(+). Its pathway is phospholipid metabolism; phosphatidylcholine biosynthesis; phosphocholine from choline: step 1/1. In terms of biological role, involved in phospholipid biosynthesis. Catalyzes the first step in phosphatidylcholine biosynthesis. The protein is Probable choline kinase 2 of Arabidopsis thaliana (Mouse-ear cress).